We begin with the raw amino-acid sequence, 172 residues long: Protein GrpE (172 aa).

Residues 1 to 23 are disordered; sequence MNQDHPECDSEELTQNSPETDPL.

The protein belongs to the GrpE family. Homodimer.

Its subcellular location is the cytoplasm. Participates actively in the response to hyperosmotic and heat shock by preventing the aggregation of stress-denatured proteins, in association with DnaK and GrpE. It is the nucleotide exchange factor for DnaK and may function as a thermosensor. Unfolded proteins bind initially to DnaJ; upon interaction with the DnaJ-bound protein, DnaK hydrolyzes its bound ATP, resulting in the formation of a stable complex. GrpE releases ADP from DnaK; ATP binding to DnaK triggers the release of the substrate protein, thus completing the reaction cycle. Several rounds of ATP-dependent interactions between DnaJ, DnaK and GrpE are required for fully efficient folding. This is Protein GrpE from Xylella fastidiosa (strain M23).